Reading from the N-terminus, the 255-residue chain is ATP-dependent L-serine kinase (255 aa).

The active site involves E36. Residue V74 coordinates O-phospho-L-serine. D75 serves as a coordination point for Mg(2+). The O-phospho-L-serine site is built by G76, H77, H78, W108, K234, T236, and H238.

This sequence belongs to the SerK family. The cofactor is Mg(2+).

The catalysed reaction is L-serine + ATP = O-phospho-L-serine + ADP + H(+). In terms of biological role, free serine kinase that uses ATP to phosphorylate L-serine to yield O-phospho-L-serine and ADP. This chain is ATP-dependent L-serine kinase, found in Desulfurococcus mucosus (strain ATCC 35584 / DSM 2162 / JCM 9187 / O7/1).